The primary structure comprises 760 residues: Catalase-peroxidase (760 aa).

Residues 1 to 57 (MTDSQDNRTPESPQGVDRKAEGGCPVLHDGVTAQGSESENPAIDSPTPRTGGRPNSL) are disordered. The segment at residues 129–251 (WHAAGTYRIH…LGAVQMGLIY (123 aa)) is a cross-link (tryptophyl-tyrosyl-methioninium (Trp-Tyr) (with M-277)). The active-site Proton acceptor is the His-130. Residues 251 to 277 (YVNPEGPNGNPDPLASARDIRETFARM) constitute a cross-link (tryptophyl-tyrosyl-methioninium (Tyr-Met) (with W-129)). His-292 is a heme b binding site.

Belongs to the peroxidase family. Peroxidase/catalase subfamily. In terms of assembly, homodimer or homotetramer. Requires heme b as cofactor. Formation of the three residue Trp-Tyr-Met cross-link is important for the catalase, but not the peroxidase activity of the enzyme.

The catalysed reaction is H2O2 + AH2 = A + 2 H2O. The enzyme catalyses 2 H2O2 = O2 + 2 H2O. Its function is as follows. Bifunctional enzyme with both catalase and broad-spectrum peroxidase activity. In Nocardioides sp. (strain ATCC BAA-499 / JS614), this protein is Catalase-peroxidase.